We begin with the raw amino-acid sequence, 336 residues long: 3-isopropylmalate dehydrogenase (336 aa).

Residues Arg87, Arg97, Arg121, and Asp211 each contribute to the substrate site. Mg(2+)-binding residues include Asp211, Asp235, and Asp239. Residue 271–283 (GSAPDIAGQGIAD) participates in NAD(+) binding.

This sequence belongs to the isocitrate and isopropylmalate dehydrogenases family. LeuB type 2 subfamily. As to quaternary structure, homodimer. Mg(2+) serves as cofactor. The cofactor is Mn(2+).

It localises to the cytoplasm. It catalyses the reaction (2R,3S)-3-isopropylmalate + NAD(+) = 4-methyl-2-oxopentanoate + CO2 + NADH. Its pathway is amino-acid biosynthesis; L-leucine biosynthesis; L-leucine from 3-methyl-2-oxobutanoate: step 3/4. In terms of biological role, catalyzes the oxidation of 3-carboxy-2-hydroxy-4-methylpentanoate (3-isopropylmalate) to 3-carboxy-4-methyl-2-oxopentanoate. The product decarboxylates to 4-methyl-2 oxopentanoate. The protein is 3-isopropylmalate dehydrogenase of Mycolicibacterium gilvum (strain PYR-GCK) (Mycobacterium gilvum (strain PYR-GCK)).